The primary structure comprises 981 residues: Peroxisomal ATPase PEX6 (981 aa).

Position 119 is an omega-N-methylarginine (R119). Residues 471–478 (GPPGSGKT) and 745–752 (GPPGTGKT) each bind ATP.

This sequence belongs to the AAA ATPase family. In terms of assembly, interacts with PEX1; forming the PEX1-PEX6 AAA ATPase complex, which is composed of a heterohexamer formed by a trimer of PEX1-PEX6 dimers. Interacts with PEX26; interaction is direct and promotes recruitment to peroxisomal membranes. Interacts with ZFAND6. As to expression, in the teeth, expressed in ameloblasts and odontoblasts. Expressed in the retina, at higher levels in the ganglion cell layer and photoreceptor layer at the joint between the outer and inner segments.

The protein localises to the cytoplasm. It localises to the cytosol. The protein resides in the peroxisome membrane. Its subcellular location is the cell projection. It is found in the cilium. The protein localises to the photoreceptor outer segment. It carries out the reaction ATP + H2O = ADP + phosphate + H(+). Its function is as follows. Component of the PEX1-PEX6 AAA ATPase complex, a protein dislocase complex that mediates the ATP-dependent extraction of the PEX5 receptor from peroxisomal membranes, an essential step for PEX5 recycling. Specifically recognizes PEX5 monoubiquitinated at 'Cys-11', and pulls it out of the peroxisome lumen through the PEX2-PEX10-PEX12 retrotranslocation channel. Extraction by the PEX1-PEX6 AAA ATPase complex is accompanied by unfolding of the TPR repeats and release of bound cargo from PEX5. The polypeptide is Peroxisomal ATPase PEX6 (Mus musculus (Mouse)).